A 333-amino-acid polypeptide reads, in one-letter code: tRNA N6-adenosine threonylcarbamoyltransferase (333 aa).

2 residues coordinate Fe cation: His111 and His115. Substrate contacts are provided by residues Leu134–Gly138, Asp167, Gly180, and Asn273. Position 301 (Asp301) interacts with Fe cation.

It belongs to the KAE1 / TsaD family. Fe(2+) serves as cofactor.

Its subcellular location is the cytoplasm. The catalysed reaction is L-threonylcarbamoyladenylate + adenosine(37) in tRNA = N(6)-L-threonylcarbamoyladenosine(37) in tRNA + AMP + H(+). In terms of biological role, required for the formation of a threonylcarbamoyl group on adenosine at position 37 (t(6)A37) in tRNAs that read codons beginning with adenine. Is involved in the transfer of the threonylcarbamoyl moiety of threonylcarbamoyl-AMP (TC-AMP) to the N6 group of A37, together with TsaE and TsaB. TsaD likely plays a direct catalytic role in this reaction. The sequence is that of tRNA N6-adenosine threonylcarbamoyltransferase from Desulforapulum autotrophicum (strain ATCC 43914 / DSM 3382 / VKM B-1955 / HRM2) (Desulfobacterium autotrophicum).